A 293-amino-acid chain; its full sequence is Ribosomal protein L11 methyltransferase (293 aa).

Positions 144, 165, 187, and 228 each coordinate S-adenosyl-L-methionine.

The protein belongs to the methyltransferase superfamily. PrmA family.

The protein resides in the cytoplasm. The catalysed reaction is L-lysyl-[protein] + 3 S-adenosyl-L-methionine = N(6),N(6),N(6)-trimethyl-L-lysyl-[protein] + 3 S-adenosyl-L-homocysteine + 3 H(+). Its function is as follows. Methylates ribosomal protein L11. The sequence is that of Ribosomal protein L11 methyltransferase from Methylococcus capsulatus (strain ATCC 33009 / NCIMB 11132 / Bath).